The following is a 117-amino-acid chain: NADH-ubiquinone oxidoreductase chain 3 (117 aa).

3 helical membrane-spanning segments follow: residues 4–24 (IIII…LASI), 60–80 (ITII…MIII), and 86–106 (IMIW…GLYH).

Belongs to the complex I subunit 3 family.

The protein localises to the mitochondrion membrane. It carries out the reaction a ubiquinone + NADH + 5 H(+)(in) = a ubiquinol + NAD(+) + 4 H(+)(out). Its function is as follows. Core subunit of the mitochondrial membrane respiratory chain NADH dehydrogenase (Complex I) that is believed to belong to the minimal assembly required for catalysis. Complex I functions in the transfer of electrons from NADH to the respiratory chain. The immediate electron acceptor for the enzyme is believed to be ubiquinone. The chain is NADH-ubiquinone oxidoreductase chain 3 (mt:ND3) from Drosophila yakuba (Fruit fly).